The primary structure comprises 596 residues: Elongation factor 4 (596 aa).

In terms of domain architecture, tr-type G spans 2 to 183 (ENIRNFCIIA…AIIQRIPPPK (182 aa)). Residues 14–19 (DHGKST) and 130–133 (NKID) each bind GTP.

It belongs to the TRAFAC class translation factor GTPase superfamily. Classic translation factor GTPase family. LepA subfamily.

The protein resides in the cell inner membrane. It catalyses the reaction GTP + H2O = GDP + phosphate + H(+). Required for accurate and efficient protein synthesis under certain stress conditions. May act as a fidelity factor of the translation reaction, by catalyzing a one-codon backward translocation of tRNAs on improperly translocated ribosomes. Back-translocation proceeds from a post-translocation (POST) complex to a pre-translocation (PRE) complex, thus giving elongation factor G a second chance to translocate the tRNAs correctly. Binds to ribosomes in a GTP-dependent manner. The polypeptide is Elongation factor 4 (Cytophaga hutchinsonii (strain ATCC 33406 / DSM 1761 / CIP 103989 / NBRC 15051 / NCIMB 9469 / D465)).